The primary structure comprises 460 residues: Keratin, type I cytoskeletal 27 (460 aa).

The tract at residues 1–83 is head; it reads MSVRFSSASR…GNEHGLLSGN (83 aa). Residues 84–119 form a coil 1A region; that stretch reads EKVTMQNLNDRLASYLDNVRALEEANADLEQKIKGW. Residues 84-399 form the IF rod domain; that stretch reads EKVTMQNLND…RLIDGEDGSC (316 aa). The tract at residues 120–141 is linker 1; it reads YEKFGPGSCRGLDHDYSRYFTV. Positions 142 to 233 are coil 1B; it reads IDDLRNQIIS…KNHEEEMKAL (92 aa). Positions 234–256 are linker 12; it reads QCAAGGNVNVEMNAAPGVDLTVL. The tract at residues 257–395 is coil 2; that stretch reads LNNMRAEYEA…ETYCRLIDGE (139 aa). The interval 396-460 is tail; the sequence is DGSCAKSKGY…NVKSEQRVPS (65 aa). The segment at 435 to 460 is disordered; the sequence is LSSRVHSVEEKSTKVNNVKSEQRVPS. Residues 448 to 460 are compositionally biased toward polar residues; the sequence is KVNNVKSEQRVPS.

The protein belongs to the intermediate filament family. In terms of assembly, heterotetramer of two type I and two type II keratins. Interacts with KRT6A to form filaments.

The protein resides in the cytoplasm. Functionally, essential for the proper assembly of type I and type II keratin protein complexes and formation of keratin intermediate filaments in the inner root sheath (irs). In Bos taurus (Bovine), this protein is Keratin, type I cytoskeletal 27.